Consider the following 112-residue polypeptide: 2Fe-2S ferredoxin (112 aa).

Residues 5-107 (IKVTFIINDG…GIKVHLPAAT (103 aa)) enclose the 2Fe-2S ferredoxin-type domain. [2Fe-2S] cluster contacts are provided by Cys42, Cys48, Cys51, and Cys88.

It belongs to the adrenodoxin/putidaredoxin family. [2Fe-2S] cluster serves as cofactor.

Its function is as follows. Ferredoxin are iron-sulfur proteins that transfer electrons in a wide variety of metabolic reactions. This is 2Fe-2S ferredoxin (fdxB) from Rickettsia rickettsii.